The chain runs to 745 residues: Elongation factor G, mitochondrial (745 aa).

The region spanning 40 to 317 is the tr-type G domain; that stretch reads ERIRNIGISA…AVLDYLPNPG (278 aa). GTP is bound by residues 49-56, 116-120, and 170-173; these read AHIDSGKT, DTPGH, and NKLD.

The protein belongs to the TRAFAC class translation factor GTPase superfamily. Classic translation factor GTPase family. EF-G/EF-2 subfamily.

The protein resides in the mitochondrion. It functions in the pathway protein biosynthesis; polypeptide chain elongation. In terms of biological role, mitochondrial GTPase that catalyzes the GTP-dependent ribosomal translocation step during translation elongation. During this step, the ribosome changes from the pre-translocational (PRE) to the post-translocational (POST) state as the newly formed A-site-bound peptidyl-tRNA and P-site-bound deacylated tRNA move to the P and E sites, respectively. Catalyzes the coordinated movement of the two tRNA molecules, the mRNA and conformational changes in the ribosome. Essential during development as it acts as a retrograde signal from mitochondria to the nucleus to slow down cell proliferation if mitochondrial energy output is low. The sequence is that of Elongation factor G, mitochondrial from Drosophila melanogaster (Fruit fly).